Consider the following 660-residue polypeptide: Histone deacetylase 5 (660 aa).

Ala-2 bears the N-acetylalanine mark. The segment at 26 to 349 is histone deacetylase; the sequence is KVGLIYDETM…SLACVQVLLE (324 aa). The active-site Proton donor/acceptor is the His-158. Zn(2+)-binding residues include Asp-198, His-200, and Asp-291.

It belongs to the histone deacetylase family. HD type 2 subfamily. As to quaternary structure, interacts with HDA6. It depends on Zn(2+) as a cofactor. As to expression, expressed in stems, leaves, flowers, siliques and mature seeds.

The protein resides in the nucleus. Its subcellular location is the cytoplasm. It catalyses the reaction N(6)-acetyl-L-lysyl-[histone] + H2O = L-lysyl-[histone] + acetate. With respect to regulation, inhibited by trichostatin A (TSA), a well-known histone deacetylase inhibitor. Its function is as follows. Responsible for the deacetylation of lysine residues on the N-terminal part of the core histones (H2A, H2B, H3 and H4). Histone deacetylation gives a tag for epigenetic repression and plays an important role in transcriptional regulation, cell cycle progression and developmental events. Histone deacetylases act via the formation of large multiprotein complexes. Involved in the regulation of flowering time by repressing FLC and AGL27/MAF1 expression. Forms a histone deacetylase complex with HDA6, FLD and MSI4/FVE that represses FLC gene expression to control flowering time. Unlike its tandem duplication HDA18, HDA5 does not seem to be required for the cellular patterning in the root epidermis. The protein is Histone deacetylase 5 of Arabidopsis thaliana (Mouse-ear cress).